We begin with the raw amino-acid sequence, 601 residues long: Membrane protein insertase YidC (601 aa).

The chain crosses the membrane as a helical span at residues 10–30 (ISISLVILVLFQVIASYVLPP). The disordered stretch occupies residues 34–63 (APPHPATQTAQTQPVSGQPAPGVPAPSAVP). Residues 39–53 (ATQTAQTQPVSGQPA) are compositionally biased toward low complexity. Over residues 54–63 (PGVPAPSAVP) the composition is skewed to pro residues. The next 4 membrane-spanning stretches (helical) occupy residues 382–404 (FGNM…FPLV), 455–475 (LPML…FISI), 510–530 (ALSP…TMWG), and 549–569 (FMPV…VLYY).

The protein belongs to the OXA1/ALB3/YidC family. Type 1 subfamily. Interacts with the Sec translocase complex via SecD. Specifically interacts with transmembrane segments of nascent integral membrane proteins during membrane integration.

It is found in the cell inner membrane. Required for the insertion and/or proper folding and/or complex formation of integral membrane proteins into the membrane. Involved in integration of membrane proteins that insert both dependently and independently of the Sec translocase complex, as well as at least some lipoproteins. Aids folding of multispanning membrane proteins. This chain is Membrane protein insertase YidC, found in Acidiphilium cryptum (strain JF-5).